The following is a 124-amino-acid chain: Small ribosomal subunit protein uS12 (124 aa).

A 3-methylthioaspartic acid modification is found at Asp89.

It belongs to the universal ribosomal protein uS12 family. Part of the 30S ribosomal subunit. Contacts proteins S8 and S17. May interact with IF1 in the 30S initiation complex.

Functionally, with S4 and S5 plays an important role in translational accuracy. Its function is as follows. Interacts with and stabilizes bases of the 16S rRNA that are involved in tRNA selection in the A site and with the mRNA backbone. Located at the interface of the 30S and 50S subunits, it traverses the body of the 30S subunit contacting proteins on the other side and probably holding the rRNA structure together. The combined cluster of proteins S8, S12 and S17 appears to hold together the shoulder and platform of the 30S subunit. The sequence is that of Small ribosomal subunit protein uS12 from Vibrio campbellii (strain ATCC BAA-1116).